Reading from the N-terminus, the 384-residue chain is MMTLPGIGVFGTGNTARVLIQLLRAEGFSIEALWGKTDEDAKVVAEEMGIPFYTSHTDDVLLHQEVDLVCISIPPPLTRQIAVKALGIGKNVICEKAASSLDAFTMVKAARYYPKLMSLVGNALRFLPAFDRMRQLILEQGYVGEIRICDVRVYGGSLLSSNYSWICDDLMGGGGLHTLGTYLVDLLTHLTNKKAEKVHGFLKTFVKQNEAISGIRYVTSDDFCFFQMQMTGGACSTVTLNFNMPGTFVHEVMVVGSAGRLVVRGTELYGQKNSASEEKLLLSEPLTSDIADVSDFDKVPPPYLMGIAHMVKALRQSFQDQEDRRTWDHKPLSVAATFEDGLYMQRVVDAIKRSNRSGEWESVELTNEETDSNQNLSEVIQHNL.

The N-terminal stretch at 1-25 (MMTLPGIGVFGTGNTARVLIQLLRA) is a signal peptide. The tract at residues 358–384 (GEWESVELTNEETDSNQNLSEVIQHNL) is disordered. Residues 372–384 (SNQNLSEVIQHNL) are compositionally biased toward polar residues.

The protein belongs to the Gfo/Idh/MocA family.

It localises to the secreted. The protein resides in the extracellular space. The protein localises to the extracellular matrix. Functionally, promotes matrix assembly. The protein is Glucose-fructose oxidoreductase domain-containing protein 2 (gfod2) of Xenopus laevis (African clawed frog).